The following is a 370-amino-acid chain: Sensor protein GtcS (370 aa).

The next 2 membrane-spanning stretches (helical) occupy residues 2–22 and 40–60; these read ITAY…VFYL and AWIV…VYLY. Residues 66–118 form the HAMP domain; that stretch reads KRITGPLEKITDAIQKMREGEFAQRLCFKADYELTLIQEHFNEMVAHLEKTEA. The Histidine kinase domain occupies 133 to 355; it reads DLSHDFKTPI…RLENDLPYRL (223 aa).

The protein localises to the cell membrane. The catalysed reaction is ATP + protein L-histidine = ADP + protein N-phospho-L-histidine.. Functionally, member of the two-component regulatory system GtcS/GtcR which may act in the control of the transcription of the grs operon which encodes the multienzymes involved in the biosynthesis of the peptide antibiotic gramicidin S. Probably activates GtcR by phosphorylation. This Aneurinibacillus migulanus (Bacillus migulanus) protein is Sensor protein GtcS (gtcS).